The chain runs to 10746 residues: Extracellular matrix-binding protein ebh (10746 aa).

Positions M1 to A39 are cleaved as a signal peptide. Polar residues-rich tracts occupy residues E41–Q59 and V67–E113. Disordered stretches follow at residues E41–Q174, M246–V274, and I1340–R1372. Residues A120–A130 are compositionally biased toward low complexity. Basic and acidic residues predominate over residues S132–E158. Residues V162–V173 are compositionally biased toward polar residues. Residues Q248–S263 show a composition bias toward low complexity. The segment covering Y1356–R1372 has biased composition (polar residues). FIVAR domains lie at A2520–A2576, S2606–E2662, D2683–A2746, A2776–K2832, A2860–N2915, A2943–N2998, A3026–K3081, A3150–K3208, A3276–A3335, A3403–A3461, A3529–A3587, A3655–K3713, A3781–A3839, A3907–A3965, A4033–A4091, A4159–A4217, Q4285–A4343, A4411–A4469, A4537–I4595, A4663–A4721, A4789–A4847, A4915–M4973, A5041–A5099, A5167–A5225, A5293–A5351, A5419–A5477, A5545–A5603, A5671–A5729, A5797–A5855, A5923–A5981, A6049–K6107, A6175–A6232, A6300–A6358, A6426–A6484, A6552–A6610, A6678–A6736, A6804–A6862, A6930–A6988, A7056–A7114, A7182–A7240, A7308–A7366, A7434–A7492, A7560–A7618, A7686–A7744, A7812–A7870, A7938–A7996, A8064–E8125, A8190–E8251, A8316–A8374, A8442–A8500, A8568–A8625, L8693–A8751, A8819–A8877, A8945–L9003, A9071–L9129, A9197–A9255, S9323–A9377, V9445–L9504, and A9699–A9755. Residues D7066 to S7080 are compositionally biased toward polar residues. The segment at D7066–D7085 is disordered. The span at D10492 to H10507 shows a compositional bias: polar residues. A disordered region spans residues D10492–L10530. Residues I10552–I10572 traverse the membrane as a helical segment. Positions R10649–K10746 are disordered. Residues T10664–H10674 show a composition bias toward basic and acidic residues. Positions K10719–K10746 are enriched in basic residues.

The protein resides in the cell membrane. In Staphylococcus aureus (strain MRSA252), this protein is Extracellular matrix-binding protein ebh (ebh).